The sequence spans 688 residues: Elongation factor G (688 aa).

The 275-residue stretch at 8 to 282 (EKFRNFGIMA…GVVDYLPSPL (275 aa)) folds into the tr-type G domain. Residues 17-24 (AHIDAGKT), 81-85 (DTPGH), and 135-138 (NKMD) contribute to the GTP site.

This sequence belongs to the TRAFAC class translation factor GTPase superfamily. Classic translation factor GTPase family. EF-G/EF-2 subfamily.

The protein resides in the cytoplasm. Catalyzes the GTP-dependent ribosomal translocation step during translation elongation. During this step, the ribosome changes from the pre-translocational (PRE) to the post-translocational (POST) state as the newly formed A-site-bound peptidyl-tRNA and P-site-bound deacylated tRNA move to the P and E sites, respectively. Catalyzes the coordinated movement of the two tRNA molecules, the mRNA and conformational changes in the ribosome. In Clostridium perfringens (strain ATCC 13124 / DSM 756 / JCM 1290 / NCIMB 6125 / NCTC 8237 / Type A), this protein is Elongation factor G.